The sequence spans 189 residues: Large ribosomal subunit protein uL5 (189 aa).

This sequence belongs to the universal ribosomal protein uL5 family. Part of the 50S ribosomal subunit; part of the 5S rRNA/L5/L18/L25 subcomplex. Contacts the 5S rRNA and the P site tRNA. Forms a bridge to the 30S subunit in the 70S ribosome.

Its function is as follows. This is one of the proteins that bind and probably mediate the attachment of the 5S RNA into the large ribosomal subunit, where it forms part of the central protuberance. In the 70S ribosome it contacts protein S13 of the 30S subunit (bridge B1b), connecting the 2 subunits; this bridge is implicated in subunit movement. Contacts the P site tRNA; the 5S rRNA and some of its associated proteins might help stabilize positioning of ribosome-bound tRNAs. The chain is Large ribosomal subunit protein uL5 from Kineococcus radiotolerans (strain ATCC BAA-149 / DSM 14245 / SRS30216).